A 152-amino-acid chain; its full sequence is Small ribosomal subunit protein uS15 (152 aa).

Residues 1–11 (MAKMHTKRKGK) show a composition bias toward basic residues. Residues 1–24 (MAKMHTKRKGKSSSTRPNRTEPPE) are disordered.

The protein belongs to the universal ribosomal protein uS15 family. In terms of assembly, part of the 30S ribosomal subunit.

The polypeptide is Small ribosomal subunit protein uS15 (Methanosarcina mazei (strain ATCC BAA-159 / DSM 3647 / Goe1 / Go1 / JCM 11833 / OCM 88) (Methanosarcina frisia)).